Here is a 327-residue protein sequence, read N- to C-terminus: Phenylalanine--tRNA ligase alpha subunit (327 aa).

E252 contributes to the Mg(2+) binding site.

Belongs to the class-II aminoacyl-tRNA synthetase family. Phe-tRNA synthetase alpha subunit type 1 subfamily. As to quaternary structure, tetramer of two alpha and two beta subunits. The cofactor is Mg(2+).

It is found in the cytoplasm. The enzyme catalyses tRNA(Phe) + L-phenylalanine + ATP = L-phenylalanyl-tRNA(Phe) + AMP + diphosphate + H(+). The chain is Phenylalanine--tRNA ligase alpha subunit from Vibrio campbellii (strain ATCC BAA-1116).